The primary structure comprises 423 residues: Probable histone-binding protein rbbD (423 aa).

WD repeat units lie at residues 119 to 159 (NHEG…LEPT), 172 to 212 (GHKK…KSDS), 222 to 262 (GHTS…KPIH), 266 to 306 (AHNS…NRLH), 310 to 350 (SHTD…EEQN), and 367 to 407 (GHTS…YNDR).

The protein belongs to the WD repeat RBAP46/RBAP48/MSI1 family. Probably binds directly to helix 1 of the histone fold of histone H4, a region that is not accessible when H4 is in chromatin.

It localises to the nucleus. Core histone-binding subunit that may target chromatin assembly factors, chromatin remodeling factors and histone deacetylases to their histone substrates in a manner that is regulated by nucleosomal DNA. Component of several complexes which regulate chromatin metabolism. This is Probable histone-binding protein rbbD (rbbD) from Dictyostelium discoideum (Social amoeba).